We begin with the raw amino-acid sequence, 331 residues long: Cytoplasmic envelopment protein 1 (331 aa).

This sequence belongs to the herpesviridae cytoplasmic envelopment protein 1 family. Interacts with protein ORF7; this interaction localizes protein ORF53 to the host trans-Golgi network (TGN).

The protein resides in the virion. It is found in the virion tegument. It localises to the host cytoplasm. The protein localises to the host Golgi apparatus. Functionally, plays a critical role in cytoplasmic virus egress. Participates in the final step of tegumentation and envelope acquisition within the host cytoplasm. This Varicella-zoster virus (strain Dumas) (HHV-3) protein is Cytoplasmic envelopment protein 1 (ORF53).